Here is a 565-residue protein sequence, read N- to C-terminus: MDKKTKKHRSLYIPYAGPVLLEFPLLNKGSAFSAEERSSFNLLGLLPEVVETIEEQAERAWIQYQGFKTEIDKHIYLRNIQDTNETLFYRLVQNHLEEMMPVIYTPTVGAACERFSEIYRRSRGVFISYENRHNMDDILQNVPNHNIKVIVVTDGERILGLGDQGIGGMGIPIGKLSLYTACGGISPAYTLPVVLDVGTNNQQLLTDPLYMGWRHPRVTDDEYYQFVDDFIQAVKHRWPDVLLQFEDFAQKNAMPLLNRYRDEICSFNDDIQGTAAVTAGTLIAASRAAGSQLSYQKIVFLGAGSAGCGIAEQIIAQTQREGLSEELARSRVFMVDRFGLLTDAMPNLLPFQTKLVQKRENLKNWDTDNEVLSLLDVVRNVKPDILIGVSGQTGLFTEEIIREMHKHCERPIVMPLSNPTSRVEATPQDIIVWTEGNALVATGSPFDPVIWKDKVYPIAQCNNSYIFPGIGLGVIASGASRITDEMLMSASETLAQHSPLVKNGEGLVLPELKDIHIVSRAIAFAVGKMAQQQGVAVKTSADALQQAIDENFWMPEYRSYRRTSI.

The active-site Proton donor is the Tyr104. Arg157 provides a ligand contact to NAD(+). Lys175 functions as the Proton acceptor in the catalytic mechanism. Positions 246, 247, and 270 each coordinate a divalent metal cation. Asp270 and Asn418 together coordinate NAD(+).

The protein belongs to the malic enzymes family. As to quaternary structure, homotetramer. Requires Mg(2+) as cofactor. It depends on Mn(2+) as a cofactor.

The catalysed reaction is (S)-malate + NAD(+) = pyruvate + CO2 + NADH. The enzyme catalyses oxaloacetate + H(+) = pyruvate + CO2. This is NAD-dependent malic enzyme from Enterobacter sp. (strain 638).